The chain runs to 144 residues: Histone H2B.2, sperm (144 aa).

A disordered region spans residues 1–51 (MPRSPAKTSPRKGSPRKGSPSRKASPKRGGKGAKRAGKGGRRRRVVKRRRR). Short sequence motifs (SPKK motif) lie at residues 4-7 (SPAK), 9-12 (SPRK), 14-17 (SPRK), 19-22 (SPSR), and 25-28 (SPKR). Phosphoserine is present on residues Ser14, Ser19, and Ser25. Positions 24 to 51 (ASPKRGGKGAKRAGKGGRRRRVVKRRRR) are enriched in basic residues. O-linked (GlcNAc) serine glycosylation is present at Ser131. Lys139 participates in a covalent cross-link: Glycyl lysine isopeptide (Lys-Gly) (interchain with G-Cter in ubiquitin).

It belongs to the histone H2B family. As to quaternary structure, the nucleosome is a histone octamer containing two molecules each of H2A, H2B, H3 and H4 assembled in one H3-H4 heterotetramer and two H2A-H2B heterodimers. The octamer wraps approximately 147 bp of DNA. Post-translationally, monoubiquitination of Lys-139 gives a specific tag for epigenetic transcriptional activation and is also prerequisite for histone H3 'Lys-4' and 'Lys-79' methylation. In terms of processing, phosphorylated on SPKK motifs 3, 4 and 5; which may regulate DNA binding. Dephosphorylated during maturation of spermatids to mature sperm and rephosphorylated at fertilization.

The protein resides in the nucleus. It localises to the chromosome. In terms of biological role, core component of nucleosome. Nucleosomes wrap and compact DNA into chromatin, limiting DNA accessibility to the cellular machineries which require DNA as a template. Histones thereby play a central role in transcription regulation, DNA repair, DNA replication and chromosomal stability. DNA accessibility is regulated via a complex set of post-translational modifications of histones, also called histone code, and nucleosome remodeling. This chain is Histone H2B.2, sperm, found in Parechinus angulosus (Angulate sea urchin).